A 764-amino-acid polypeptide reads, in one-letter code: FAST kinase domain-containing protein 5, mitochondrial (764 aa).

The N-terminal 27 residues, 1–27 (MAATLKSLKLLRYQAFCSPSAFGAVRS), are a transit peptide targeting the mitochondrion. The tract at residues 68 to 94 (IPTTSSARPGLEFSKTSSSKASTLQLG) is disordered. A compositionally biased stretch (polar residues) spans 81–93 (SKTSSSKASTLQL). Ser-95 is modified (phosphoserine). Lys-507 carries the N6-acetyllysine modification. Residues 697 to 757 (LAIQFTNRNQ…RLEKLAFLHE (61 aa)) enclose the RAP domain.

This sequence belongs to the FAST kinase family. As to quaternary structure, found in a complex with GRSF1, DDX28, DHX30 and FASTKD2. Associates with the 12S mitochondrial rRNA (12S mt-rRNA).

The protein localises to the mitochondrion matrix. It localises to the mitochondrion nucleoid. Functionally, plays an important role in the processing of non-canonical mitochondrial mRNA precursors. This is FAST kinase domain-containing protein 5, mitochondrial (FASTKD5) from Pongo abelii (Sumatran orangutan).